The following is a 164-amino-acid chain: Lipoprotein signal peptidase (164 aa).

Transmembrane regions (helical) follow at residues 2 to 22 (MSLL…AIVL), 40 to 60 (VVIT…AFSF), 70 to 90 (WLFS…MAKA), and 99 to 119 (LAYS…VVYG). Active-site residues include D123 and D142. Residues 138 to 158 (FNVADMAISCGAVFIILDGFI) form a helical membrane-spanning segment.

This sequence belongs to the peptidase A8 family.

The protein localises to the cell inner membrane. It catalyses the reaction Release of signal peptides from bacterial membrane prolipoproteins. Hydrolyzes -Xaa-Yaa-Zaa-|-(S,diacylglyceryl)Cys-, in which Xaa is hydrophobic (preferably Leu), and Yaa (Ala or Ser) and Zaa (Gly or Ala) have small, neutral side chains.. Its pathway is protein modification; lipoprotein biosynthesis (signal peptide cleavage). Functionally, this protein specifically catalyzes the removal of signal peptides from prolipoproteins. This Tolumonas auensis (strain DSM 9187 / NBRC 110442 / TA 4) protein is Lipoprotein signal peptidase.